A 96-amino-acid polypeptide reads, in one-letter code: Co-chaperonin GroES (96 aa).

Belongs to the GroES chaperonin family. In terms of assembly, heptamer of 7 subunits arranged in a ring. Interacts with the chaperonin GroEL.

It localises to the cytoplasm. Functionally, together with the chaperonin GroEL, plays an essential role in assisting protein folding. The GroEL-GroES system forms a nano-cage that allows encapsulation of the non-native substrate proteins and provides a physical environment optimized to promote and accelerate protein folding. GroES binds to the apical surface of the GroEL ring, thereby capping the opening of the GroEL channel. The sequence is that of Co-chaperonin GroES from Wolbachia sp. subsp. Drosophila simulans (strain wRi).